Consider the following 267-residue polypeptide: Cerberus (267 aa).

Positions 1-17 (MHLLLFQLLVLLPLGKT) are cleaved as a signal peptide. Disordered stretches follow at residues 19–52 (RHQDGRQNQSSLSPVLLPRNQRELPTGNHEEAEE) and 87–113 (WKKPEREMHPSRDSDSEPFPPGTQSLI). An N-linked (GlcNAc...) asparagine glycan is attached at asparagine 26. Basic and acidic residues predominate over residues 88 to 101 (KKPEREMHPSRDSD). Intrachain disulfides connect cysteine 162–cysteine 209, cysteine 176–cysteine 223, cysteine 186–cysteine 239, and cysteine 190–cysteine 241. In terms of domain architecture, CTCK spans 162-246 (CRTVPFSQTI…EECQCKVKTE (85 aa)). Asparagine 222 carries N-linked (GlcNAc...) asparagine glycosylation.

It belongs to the DAN family. As to quaternary structure, forms monomers and predominantly dimers. In terms of processing, N-glycosylated.

Its subcellular location is the secreted. Its function is as follows. Cytokine that may play a role in anterior neural induction and somite formation during embryogenesis in part through a BMP-inhibitory mechanism. Can regulate Nodal signaling during gastrulation as well as the formation and patterning of the primitive streak. The sequence is that of Cerberus (CER1) from Homo sapiens (Human).